A 347-amino-acid chain; its full sequence is Probable RNA methyltransferase azo0122 (347 aa).

The active-site Proton acceptor is E89. One can recognise a Radical SAM core domain in the interval 92 to 318 (LLLRDGLCVS…AKLRQSAGQD (227 aa)). A disulfide bridge links C99 with C323. [4Fe-4S] cluster is bound by residues C106, C110, and C113. S-adenosyl-L-methionine-binding positions include 151 to 152 (GE), S181, 204 to 206 (SLH), and N280. Catalysis depends on C323, which acts as the S-methylcysteine intermediate.

The protein belongs to the radical SAM superfamily. RlmN family. [4Fe-4S] cluster is required as a cofactor.

Its subcellular location is the cytoplasm. This Azoarcus sp. (strain BH72) protein is Probable RNA methyltransferase azo0122.